The chain runs to 515 residues: Penton protein (515 aa).

Residues 1 to 25 are disordered; that stretch reads MYRSLRPPTSIPPPPPSGPSPYPAM. A compositionally biased stretch (pro residues) spans 9 to 22; it reads TSIPPPPPSGPSPY.

The protein belongs to the adenoviridae penton family. As to quaternary structure, interacts with the fiber protein (via N-terminal tail region). Interacts with the capsid vertex protein; this interaction binds the penton base to neighboring peripentonal hexons.

It is found in the virion. The protein localises to the host nucleus. In terms of biological role, major capsid protein that self-associates to form penton base pentamers, each in the shape of a pentagon, situated at the 12 vertices of the pseudo T=25 capsid. Involved in virus secondary attachment to host cell after initial attachment by the fiber protein, and in endocytosis of virions. As the virus enters the host cell, penton proteins are shed concomitant with virion acidification in the endosome. This is Penton protein from Galliformes (FAdV-1).